Consider the following 222-residue polypeptide: Phosphoribosylformylglycinamidine synthase subunit PurQ (222 aa).

Residues 2–222 form the Glutamine amidotransferase type-1 domain; that stretch reads SVAIVRFPGT…DNLLHIAEMK (221 aa). Cysteine 86 acts as the Nucleophile in catalysis. Catalysis depends on residues histidine 194 and glutamate 196.

Part of the FGAM synthase complex composed of 1 PurL, 1 PurQ and 2 PurS subunits.

The protein resides in the cytoplasm. The enzyme catalyses N(2)-formyl-N(1)-(5-phospho-beta-D-ribosyl)glycinamide + L-glutamine + ATP + H2O = 2-formamido-N(1)-(5-O-phospho-beta-D-ribosyl)acetamidine + L-glutamate + ADP + phosphate + H(+). It carries out the reaction L-glutamine + H2O = L-glutamate + NH4(+). It participates in purine metabolism; IMP biosynthesis via de novo pathway; 5-amino-1-(5-phospho-D-ribosyl)imidazole from N(2)-formyl-N(1)-(5-phospho-D-ribosyl)glycinamide: step 1/2. Part of the phosphoribosylformylglycinamidine synthase complex involved in the purines biosynthetic pathway. Catalyzes the ATP-dependent conversion of formylglycinamide ribonucleotide (FGAR) and glutamine to yield formylglycinamidine ribonucleotide (FGAM) and glutamate. The FGAM synthase complex is composed of three subunits. PurQ produces an ammonia molecule by converting glutamine to glutamate. PurL transfers the ammonia molecule to FGAR to form FGAM in an ATP-dependent manner. PurS interacts with PurQ and PurL and is thought to assist in the transfer of the ammonia molecule from PurQ to PurL. In Helicobacter hepaticus (strain ATCC 51449 / 3B1), this protein is Phosphoribosylformylglycinamidine synthase subunit PurQ.